Here is a 73-residue protein sequence, read N- to C-terminus: SIFamide-related peptide (73 aa).

An N-terminal signal peptide occupies residues Met1–Ala23. Position 35 is a phenylalanine amide (Phe35). Positions Ser39–Asn73 are excised as a propeptide.

In terms of tissue distribution, expressed in brain, the retrocerebral complex and in ventral, thoracic and abdominal ganglia (at protein level).

It localises to the secreted. The chain is SIFamide-related peptide from Camponotus floridanus (Florida carpenter ant).